The following is a 191-amino-acid chain: Dephospho-CoA kinase (191 aa).

The region spanning 3–191 is the DPCK domain; that stretch reads AIGITGSYAS…KLILVIARKL (189 aa). 11–16 contributes to the ATP binding site; it reads ASGKTF.

It belongs to the CoaE family.

Its subcellular location is the cytoplasm. It catalyses the reaction 3'-dephospho-CoA + ATP = ADP + CoA + H(+). It participates in cofactor biosynthesis; coenzyme A biosynthesis; CoA from (R)-pantothenate: step 5/5. In terms of biological role, catalyzes the phosphorylation of the 3'-hydroxyl group of dephosphocoenzyme A to form coenzyme A. The sequence is that of Dephospho-CoA kinase from Rickettsia felis (strain ATCC VR-1525 / URRWXCal2) (Rickettsia azadi).